We begin with the raw amino-acid sequence, 639 residues long: Signal recognition particle receptor subunit alpha (639 aa).

Positions 132-317 (APTTMKKFED…STKPSATKGT (186 aa)) are disordered. Basic and acidic residues-rich tracts occupy residues 137–146 (KKFEDSEKAK) and 153–165 (IETR…EKAK). Position 178 is a phosphoserine (Ser-178). Positions 204–240 (ELSKEEQIRRKREEFIQKHGRGMEKSSKSSKSDAPKE) are enriched in basic and acidic residues. At Thr-285 the chain carries Phosphothreonine. Phosphoserine is present on residues Ser-297, Ser-298, and Ser-299. Polar residues predominate over residues 305–315 (AQNSTKPSATK). Residues 420-637 (YVVTFCGVNG…NAKAVVAALM (218 aa)) form an NG domain region. A GTP-binding site is contributed by 426–433 (GVNGVGKS). A Phosphoserine modification is found at Ser-474. 521–525 (DTAGR) is a binding site for GTP. The residue at position 579 (Thr-579) is a Phosphothreonine. Position 589 to 592 (589 to 592 (TKFD)) interacts with GTP.

It belongs to the GTP-binding SRP family. In terms of assembly, heterodimer with SRPRB. Interacts with the signal recognition particle (SRP) complex subunit SRP54.

The protein localises to the endoplasmic reticulum membrane. In terms of biological role, component of the SRP (signal recognition particle) receptor. Ensures, in conjunction with the signal recognition particle, the correct targeting of the nascent secretory proteins to the endoplasmic reticulum membrane system. Forms a guanosine 5'-triphosphate (GTP)-dependent complex with the SRP subunit SRP54. SRP receptor compaction and GTPase rearrangement drive SRP-mediated cotranslational protein translocation into the ER. The sequence is that of Signal recognition particle receptor subunit alpha from Bos taurus (Bovine).